The sequence spans 162 residues: NAD(P)H-quinone oxidoreductase subunit N (162 aa).

It belongs to the complex I NdhN subunit family. As to quaternary structure, NDH-1 can be composed of about 15 different subunits; different subcomplexes with different compositions have been identified which probably have different functions.

The protein localises to the cellular thylakoid membrane. The catalysed reaction is a plastoquinone + NADH + (n+1) H(+)(in) = a plastoquinol + NAD(+) + n H(+)(out). It catalyses the reaction a plastoquinone + NADPH + (n+1) H(+)(in) = a plastoquinol + NADP(+) + n H(+)(out). Its function is as follows. NDH-1 shuttles electrons from an unknown electron donor, via FMN and iron-sulfur (Fe-S) centers, to quinones in the respiratory and/or the photosynthetic chain. The immediate electron acceptor for the enzyme in this species is believed to be plastoquinone. Couples the redox reaction to proton translocation, and thus conserves the redox energy in a proton gradient. Cyanobacterial NDH-1 also plays a role in inorganic carbon-concentration. The chain is NAD(P)H-quinone oxidoreductase subunit N from Trichormus variabilis (strain ATCC 29413 / PCC 7937) (Anabaena variabilis).